Here is a 288-residue protein sequence, read N- to C-terminus: Phenazine biosynthesis-like domain-containing protein 2 (288 aa).

Glu-46 is an active-site residue.

This sequence belongs to the PhzF family.

The polypeptide is Phenazine biosynthesis-like domain-containing protein 2 (Pbld2) (Mus musculus (Mouse)).